The primary structure comprises 158 residues: Glycine/sarcosine/betaine reductase complex component A (158 aa).

The active site involves U44. U44 is a non-standard amino acid (selenocysteine).

This sequence belongs to the GrdA family. In terms of assembly, monomer. Component of the glycine, sarcosine and betaine reductase complexes, together with components B and C.

The catalysed reaction is acetyl phosphate + [thioredoxin]-disulfide + NH4(+) + H2O = [thioredoxin]-dithiol + glycine + phosphate + H(+). It carries out the reaction acetyl phosphate + methylamine + [thioredoxin]-disulfide + H2O = sarcosine + [thioredoxin]-dithiol + phosphate + H(+). It catalyses the reaction acetyl phosphate + trimethylamine + [thioredoxin]-disulfide + H2O = glycine betaine + [thioredoxin]-dithiol + phosphate + H(+). In the first step of glycine, betaine and sarcosine reductases, the substrate is bound to component PB via a Schiff base intermediate. Then the PB-activated substrate is nucleophilically attacked by the selenol anion of component PA to transform it to a carboxymethylated selenoether and the respective amine. By action of component PC, acetyl phosphate is formed, leaving component PA in its oxidized state. Finally component PA becomes reduced by the thioredoxin system to start a new catalytic cycle of reductive deamination. This Clostridium botulinum (strain ATCC 19397 / Type A) protein is Glycine/sarcosine/betaine reductase complex component A.